The sequence spans 203 residues: Small ribosomal subunit protein uS5 (203 aa).

Residues 51–114 (LEDEVLDITM…ENAKLNVVRI (64 aa)) enclose the S5 DRBM domain.

It belongs to the universal ribosomal protein uS5 family. In terms of assembly, part of the 30S ribosomal subunit. Contacts protein S4.

Functionally, with S4 and S12 plays an important role in translational accuracy. The protein is Small ribosomal subunit protein uS5 of Methanothrix thermoacetophila (strain DSM 6194 / JCM 14653 / NBRC 101360 / PT) (Methanosaeta thermophila).